Reading from the N-terminus, the 503-residue chain is Cytochrome P450 11B1, mitochondrial (503 aa).

The transit peptide at 1–24 (MAIWAKAEAWLAGPWLALNRARTL) directs the protein to the mitochondrion. C450 serves as a coordination point for heme.

This sequence belongs to the cytochrome P450 family. The cofactor is heme.

The protein resides in the mitochondrion inner membrane. It catalyses the reaction a steroid + 2 reduced [adrenodoxin] + O2 + 2 H(+) = an 11beta-hydroxysteroid + 2 oxidized [adrenodoxin] + H2O. The enzyme catalyses 11-deoxycortisol + 2 reduced [adrenodoxin] + O2 + 2 H(+) = cortisol + 2 oxidized [adrenodoxin] + H2O. The catalysed reaction is 21-hydroxyprogesterone + 2 reduced [adrenodoxin] + O2 + 2 H(+) = corticosterone + 2 oxidized [adrenodoxin] + H2O. It carries out the reaction corticosterone + 2 reduced [adrenodoxin] + O2 + 2 H(+) = 18-hydroxycorticosterone + 2 oxidized [adrenodoxin] + H2O. It catalyses the reaction 18-hydroxycorticosterone + 2 reduced [adrenodoxin] + O2 + 2 H(+) = aldosterone + 2 oxidized [adrenodoxin] + 2 H2O. The enzyme catalyses 21-hydroxyprogesterone + 2 reduced [adrenodoxin] + O2 + 2 H(+) = 19-hydroxy-11-deoxycorticosterone + 2 oxidized [adrenodoxin] + H2O. The catalysed reaction is 19-hydroxy-11-deoxycorticosterone + 2 reduced [adrenodoxin] + O2 + 2 H(+) = 19-oxo-11-deoxycorticosterone + 2 oxidized [adrenodoxin] + 2 H2O. The protein operates within steroid biosynthesis; glucocorticoid biosynthesis. It participates in steroid hormone biosynthesis. Functionally, a cytochrome P450 monooxygenase that catalyzes the biosynthesis of aldosterone and other adrenal corticoids. Differing from other species (such as human, rat and mice), it is able to catalyze three sequential oxidative reactions of 11-deoxycorticosterone (21-hydroxyprogesterone), namely 11-beta hydroxylation, followed by two successive oxidations at C18 yielding 18-hydroxy and then 18-oxo intermediates, and ending with the formation of aldosterone. Steroid 11beta, 18- and 19-hydroxylase. Mechanistically, uses molecular oxygen inserting one oxygen atom into a substrate and reducing the second into a water molecule. Two electrons are provided by NADPH via a two-protein mitochondrial transfer system comprising flavoprotein FDXR (adrenodoxin/ferredoxin reductase) and nonheme iron-sulfur protein FDX1 or FDX2 (adrenodoxin/ferredoxin). The polypeptide is Cytochrome P450 11B1, mitochondrial (CYP11B1) (Sus scrofa (Pig)).